Reading from the N-terminus, the 62-residue chain is Large ribosomal subunit protein bL33 (62 aa).

Belongs to the bacterial ribosomal protein bL33 family.

This chain is Large ribosomal subunit protein bL33, found in Azobacteroides pseudotrichonymphae genomovar. CFP2.